Consider the following 937-residue polypeptide: MMTTALTPFSARHIGPGVNDVRAMLAVIGVPSVETLISQAVPQSIRLDLPLTLPAPASEAEALAELSAIMAKNTVLKSFIGAGYHGVHVPPVIQRNLFENPAWYTAYTPYQAEISQGRLEMLFNFQTLVTELTGLPVASASLLDEATAVAEAVGIALRHHRDKRTKVAFAGTPHPQTLDVVRTRAEPLGIEIDGETIDDNTAALLVSWPDTLGVYGDHKAAIDKARAAGALVVFIADPLGLTLTDAPAKLGADIAVGPMQRFGVPMGFGGPHAAYCAVSDRLTRLMPGRLVGQSTDSKGRPGYRLALQTREQHIRRDKATSNICTAQALLANMATAYAIWHGPAGLQAIAGRIHALANRLASGLKAAGVSVLGASRFDTVTVEAKGKAAEIAEAAEKTGRLLRVLDADHVGIAFDETSTDADLDAIASLFGAKAAPSADSTVPGKPRGKEFLTQPVFNENKSETDMMRLLRRLADKDLALDRSMIPLGSCTMKLNAAAEMMPVSWPSIADLHPFAPASHSAGYRAMIGELEGWLSEITGFDAVSLQPNAGSQGEYAGLLAIRAYHRSRGEGHRTVCLIPSSAHGTNPASAAMAGMSVVVVRCLEDGNIDMDDMRAKANEHSKNLAALMFTYPSTHGVYEEGARHLCALIHEHGGQVYFDGANLNALVALARPADIGADVCHMNLHKTFCIPHGGGGPGVGPIGVKAHLKPYLPGHVTEGSAHAVSAAPFGSASILPITWMYIRMMGAAGLKQATETAIISANYVATRLAPHFPLLYKGRHDRIAHECILDTRVLKESAGISVDDIAKRLIDYGFHAPTMSFPVAGTLMVEPTESEPKRELDRFCEAMIAIAGEAAKVARGDWPLADNPLVNAPHTAAETLAGQWTHPYSRLEAAYPAGDADTAAKYWPPVSRIDNVAGDRNLVCSCPPLSDYLGAAE.

N6-(pyridoxal phosphate)lysine is present on lysine 686.

This sequence belongs to the GcvP family. As to quaternary structure, the glycine cleavage system is composed of four proteins: P, T, L and H. Requires pyridoxal 5'-phosphate as cofactor.

It carries out the reaction N(6)-[(R)-lipoyl]-L-lysyl-[glycine-cleavage complex H protein] + glycine + H(+) = N(6)-[(R)-S(8)-aminomethyldihydrolipoyl]-L-lysyl-[glycine-cleavage complex H protein] + CO2. Functionally, the glycine cleavage system catalyzes the degradation of glycine. The P protein binds the alpha-amino group of glycine through its pyridoxal phosphate cofactor; CO(2) is released and the remaining methylamine moiety is then transferred to the lipoamide cofactor of the H protein. This Mesorhizobium japonicum (strain LMG 29417 / CECT 9101 / MAFF 303099) (Mesorhizobium loti (strain MAFF 303099)) protein is Glycine dehydrogenase (decarboxylating).